The sequence spans 365 residues: 3-isopropylmalate dehydrogenase (365 aa).

78-91 (GKKWNNLPIEKRPE) lines the NAD(+) pocket. 4 residues coordinate substrate: Arg99, Arg109, Arg139, and Asp228. The Mg(2+) site is built by Asp228, Asp252, and Asp256. 286-298 (GSAPDIAGKNIAN) is a binding site for NAD(+).

Belongs to the isocitrate and isopropylmalate dehydrogenases family. LeuB type 1 subfamily. Homodimer. Requires Mg(2+) as cofactor. It depends on Mn(2+) as a cofactor.

The protein resides in the cytoplasm. The enzyme catalyses (2R,3S)-3-isopropylmalate + NAD(+) = 4-methyl-2-oxopentanoate + CO2 + NADH. It functions in the pathway amino-acid biosynthesis; L-leucine biosynthesis; L-leucine from 3-methyl-2-oxobutanoate: step 3/4. Functionally, catalyzes the oxidation of 3-carboxy-2-hydroxy-4-methylpentanoate (3-isopropylmalate) to 3-carboxy-4-methyl-2-oxopentanoate. The product decarboxylates to 4-methyl-2 oxopentanoate. In Buchnera aphidicola subsp. Macrosiphoniella ludovicianae, this protein is 3-isopropylmalate dehydrogenase.